Here is a 917-residue protein sequence, read N- to C-terminus: Lipoxygenase 6, chloroplastic (917 aa).

The N-terminal 40 residues, M1–R40, are a transit peptide targeting the chloroplast. Residues E46–K57 are compositionally biased toward basic and acidic residues. Residues E46–S66 form a disordered region. The 119-residue stretch at E98–R216 folds into the PLAT domain. The Lipoxygenase domain maps to P219–I917. H575, H580, H767, and N771 together coordinate Fe cation. Positions K880–H904 are disordered. I917 contacts Fe cation.

Belongs to the lipoxygenase family. Fe cation serves as cofactor.

Its subcellular location is the plastid. It localises to the chloroplast. It catalyses the reaction (9Z,12Z)-octadecadienoate + O2 = (13S)-hydroperoxy-(9Z,11E)-octadecadienoate. It carries out the reaction (9Z,12Z,15Z)-octadecatrienoate + O2 = (13S)-hydroperoxy-(9Z,11E,15Z)-octadecatrienoate. It functions in the pathway lipid metabolism; oxylipin biosynthesis. In terms of biological role, plant lipoxygenases may be involved in a number of diverse aspects of plant physiology including growth and development, pest resistance, and senescence or responses to wounding. Catalyzes the hydroperoxidation of lipids containing a cis,cis-1,4-pentadiene structure. 13S-lipoxygenase that can use linolenic acid as substrates. The protein is Lipoxygenase 6, chloroplastic of Arabidopsis thaliana (Mouse-ear cress).